The primary structure comprises 1151 residues: Elicitor of plant defense protein 1 (1151 aa).

Disordered stretches follow at residues 22–130 (YQDP…TLGE), 178–197 (ERIRAEESDSGRLSPLRSIK), and 236–255 (NYNSVIPPPEPLNTDPDMHP). The span at 39 to 49 (IIEDGEPEDEW) shows a compositional bias: acidic residues. Residues 64–99 (QNSASRLSKMSLTERFSIQTLDDTDGNTKSNRSSAT) are compositionally biased toward polar residues. A compositionally biased stretch (low complexity) spans 104-122 (NPPDFSNGNDDSNGNSQNP). Residues 178–187 (ERIRAEESDS) are compositionally biased toward basic and acidic residues. A uDENN domain is found at 242–500 (PPPEPLNTDP…NLCTEAFNPL (259 aa)). Residues 524 to 656 (EIPGSRTIDI…ARRKLMSLLQ (133 aa)) enclose the cDENN domain. Residues 658–1019 (AAPHKLRYGV…DREMQPANDA (362 aa)) form the dDENN domain. Composition is skewed to polar residues over residues 695-711 (STPKSTLGKWVSQSSSG) and 744-760 (TSKSGKTSPQSSVSPVS). Residues 695-809 (STPKSTLGKW…SSSFGVDKHP (115 aa)) are disordered. Positions 784–798 (LREKRSGHFGEEKMR) are enriched in basic and acidic residues. The Phorbol-ester/DAG-type zinc finger occupies 886 to 934 (GHCFNYMPKDNTSMCTICNDLAEGDGVYRCTGCKIVSHGRCLGYCSLIC).

Belongs to the EPD1 elicitor family.

It is found in the secreted. Its subcellular location is the host cell. Acts as an elicitor that triggers cell death and defense responses in the host plants. The polypeptide is Elicitor of plant defense protein 1 (Gibberella zeae (strain ATCC MYA-4620 / CBS 123657 / FGSC 9075 / NRRL 31084 / PH-1) (Wheat head blight fungus)).